We begin with the raw amino-acid sequence, 488 residues long: Alkaline nuclease (488 aa).

Belongs to the herpesviridae alkaline nuclease family. Interacts with major DNA-binding protein; this interaction increases the nuclease processivity of the alkaline exonuclease.

The protein localises to the host nucleus. It localises to the host cytoplasm. Functionally, plays a role in processing non linear or branched viral DNA intermediates in order to promote the production of mature packaged unit-length linear progeny viral DNA molecules. Exhibits endonuclease and exonuclease activities and accepts both double-stranded and single-stranded DNA as substrate. Exonuclease digestion of DNA is in the 5'-&gt; 3' direction and the products are 5'-monophosphate nucleosides. Additionally, forms a recombinase with the major DNA-binding protein, which displays strand exchange activity. The protein is Alkaline nuclease (U70) of Homo sapiens (Human).